The sequence spans 523 residues: Bifunctional purine biosynthesis protein PurH (523 aa).

Residues M1 to T154 form the MGS-like domain.

The protein belongs to the PurH family.

It carries out the reaction (6R)-10-formyltetrahydrofolate + 5-amino-1-(5-phospho-beta-D-ribosyl)imidazole-4-carboxamide = 5-formamido-1-(5-phospho-D-ribosyl)imidazole-4-carboxamide + (6S)-5,6,7,8-tetrahydrofolate. The catalysed reaction is IMP + H2O = 5-formamido-1-(5-phospho-D-ribosyl)imidazole-4-carboxamide. The protein operates within purine metabolism; IMP biosynthesis via de novo pathway; 5-formamido-1-(5-phospho-D-ribosyl)imidazole-4-carboxamide from 5-amino-1-(5-phospho-D-ribosyl)imidazole-4-carboxamide (10-formyl THF route): step 1/1. It functions in the pathway purine metabolism; IMP biosynthesis via de novo pathway; IMP from 5-formamido-1-(5-phospho-D-ribosyl)imidazole-4-carboxamide: step 1/1. This chain is Bifunctional purine biosynthesis protein PurH, found in Streptomyces coelicolor (strain ATCC BAA-471 / A3(2) / M145).